We begin with the raw amino-acid sequence, 449 residues long: Glutamyl-tRNA reductase (449 aa).

Substrate-binding positions include 58 to 61 (TCNR), serine 121, 126 to 128 (ETQ), and glutamine 132. The active-site Nucleophile is cysteine 59. An NADP(+)-binding site is contributed by 203 to 208 (GLGEMA).

The protein belongs to the glutamyl-tRNA reductase family. In terms of assembly, homodimer.

It carries out the reaction (S)-4-amino-5-oxopentanoate + tRNA(Glu) + NADP(+) = L-glutamyl-tRNA(Glu) + NADPH + H(+). The protein operates within porphyrin-containing compound metabolism; protoporphyrin-IX biosynthesis; 5-aminolevulinate from L-glutamyl-tRNA(Glu): step 1/2. Functionally, catalyzes the NADPH-dependent reduction of glutamyl-tRNA(Glu) to glutamate 1-semialdehyde (GSA). This is Glutamyl-tRNA reductase from Helicobacter pylori (strain G27).